Here is a 629-residue protein sequence, read N- to C-terminus: MSMTNYPLLERVNDPADLRRLPRAELKTLAHELRAFVLESVSKTGGHLSSNLGTVELTVALHAVFDTPRDRLVWDVGHQTYPHKILTGRRDRMPSLRQLGGLSGFPQRAESEYDTFGTAHSSTSISAALGMALAAKQRGDERRCVAIIGDGAMTAGMAFEALNNAGVADANLLVILNDNDMSISPPVGALNRYLAQLMSGQFYAKARDMGKSVLKNAPPLLELAKRLEQQAKGMVVPATLFEKFGFNYIGPIDGHDLDSLIPTLENIRGLKGPQFLHVVTKKGQGYKLAEADPVAYHGPGKFDPRVGLVKPATPPKQTFTQVFGQWLCDMADKDKRLVGITPAMREGSGMVEFHQRFPDRYYDVGIAEQHAVTFAAGMACEGVKPVVAIYSTFLQRAYDQLIHDVALQNLPVVFALDRAGLVGADGATHAGAYDIAFVRCIPHMSMACPADERECRQLLTTAYEQDHPVAVRYPRGAGVGVAPLPDLEGLPFGKGEVRRTGQRIAILAFGTLLYPALQAAQALDATVVNMRWAKPLDTQLLLQVAAEHDALVTVEEGCIMGGAGSAVAEALAAAGLQRPLLQLGLPDVFIEHGDPAKLLALQGLDAAGMQRSITERFGALPGAQALAAA.

Residues H78 and 119–121 (AHS) contribute to the thiamine diphosphate site. D150 is a binding site for Mg(2+). Thiamine diphosphate-binding positions include 151–152 (GA), N179, Y286, and E368. N179 is a Mg(2+) binding site.

The protein belongs to the transketolase family. DXPS subfamily. In terms of assembly, homodimer. Mg(2+) is required as a cofactor. Requires thiamine diphosphate as cofactor.

The catalysed reaction is D-glyceraldehyde 3-phosphate + pyruvate + H(+) = 1-deoxy-D-xylulose 5-phosphate + CO2. It functions in the pathway metabolic intermediate biosynthesis; 1-deoxy-D-xylulose 5-phosphate biosynthesis; 1-deoxy-D-xylulose 5-phosphate from D-glyceraldehyde 3-phosphate and pyruvate: step 1/1. Its function is as follows. Catalyzes the acyloin condensation reaction between C atoms 2 and 3 of pyruvate and glyceraldehyde 3-phosphate to yield 1-deoxy-D-xylulose-5-phosphate (DXP). In Acidovorax sp. (strain JS42), this protein is 1-deoxy-D-xylulose-5-phosphate synthase.